The sequence spans 425 residues: Glucan 1,3-beta-glucosidase (425 aa).

Residues 1-19 (MNLTLLLLALIFSPSLIFS) form the signal peptide. Glu-219 serves as the catalytic Proton donor. 2 disulfide bridges follow: Cys-301/Cys-423 and Cys-326/Cys-352. Glu-318 (nucleophile) is an active-site residue.

Belongs to the glycosyl hydrolase 5 (cellulase A) family.

The protein resides in the secreted. It carries out the reaction Successive hydrolysis of beta-D-glucose units from the non-reducing ends of (1-&gt;3)-beta-D-glucans, releasing alpha-glucose.. Functionally, beta-glucanases participate in the metabolism of beta-glucan, the main structural component of the cell wall. It could also function biosynthetically as a transglycosylase. The polypeptide is Glucan 1,3-beta-glucosidase (Schwanniomyces occidentalis (Yeast)).